Here is a 397-residue protein sequence, read N- to C-terminus: Galactokinase (397 aa).

The interval 1 to 27 (MGEAVGEPSASGSGSCTGRSRRGCGRR) is disordered. Residues 9–18 (SASGSGSCTG) show a composition bias toward low complexity. 36-39 (EHTD) is a substrate binding site. Residues S69 and 124 to 130 (GAGLSSS) contribute to the ATP site. The Mg(2+) site is built by S130 and E161. Residue D173 is the Proton acceptor of the active site. Position 225 (Y225) interacts with substrate.

It belongs to the GHMP kinase family. GalK subfamily.

It localises to the cytoplasm. The catalysed reaction is alpha-D-galactose + ATP = alpha-D-galactose 1-phosphate + ADP + H(+). The protein operates within carbohydrate metabolism; galactose metabolism. Catalyzes the transfer of the gamma-phosphate of ATP to D-galactose to form alpha-D-galactose-1-phosphate (Gal-1-P). The polypeptide is Galactokinase (Streptomyces lividans).